A 445-amino-acid polypeptide reads, in one-letter code: MREIVHIQAGQCGNQIGAKFWQVISDEHGVDPTGTYKGDSDLQLERINVYYNEATGGRYVPRAVLIDLEPGTMDAVRAGPFGQLFRPDNFVFGQTGAGNNWAKGHYTEGAELIDSVLDVVRNEAESCDCLQGFQMTHSLGGGTGSGMGTLLIAKLREEYPDRVMMTFSVCPSPKVSDTVVEPYNATLSVHQIVENTDESFVLDNEALYDICFRTLKLTTPTYGDLNHLVCVCMSGVTSSLRFPGQLNCDLRKVAVNLIPFPRLHFFMVGFAPLTSRGSQQYRALTVPELTQQCFDAKNMMCAADPRHGRFLTASCMFRGRMSTKEVDEQMLNVQTKNSSYFVEWIPNNIKASVCDIPPKGLKMSSTFVGNSTAIQEMFKRVGEQFTAMYKRKAFLHWYTGEGMDDMEFTEAESNMNDLVSEYQQYQEASADDEADEFDEEEGDEE.

GTP contacts are provided by Gln-11, Glu-69, Ser-138, Gly-142, Thr-143, Gly-144, Asn-204, and Asn-226. Glu-69 lines the Mg(2+) pocket. Over residues 417-426 (DLVSEYQQYQ) the composition is skewed to polar residues. The disordered stretch occupies residues 417 to 445 (DLVSEYQQYQEASADDEADEFDEEEGDEE). The span at 429 to 445 (SADDEADEFDEEEGDEE) shows a compositional bias: acidic residues.

Belongs to the tubulin family. In terms of assembly, dimer of alpha and beta chains. A typical microtubule is a hollow water-filled tube with an outer diameter of 25 nm and an inner diameter of 15 nM. Alpha-beta heterodimers associate head-to-tail to form protofilaments running lengthwise along the microtubule wall with the beta-tubulin subunit facing the microtubule plus end conferring a structural polarity. Microtubules usually have 13 protofilaments but different protofilament numbers can be found in some organisms and specialized cells. It depends on Mg(2+) as a cofactor.

The protein localises to the cytoplasm. It is found in the cytoskeleton. Functionally, tubulin is the major constituent of microtubules, a cylinder consisting of laterally associated linear protofilaments composed of alpha- and beta-tubulin heterodimers. Microtubules grow by the addition of GTP-tubulin dimers to the microtubule end, where a stabilizing cap forms. Below the cap, tubulin dimers are in GDP-bound state, owing to GTPase activity of alpha-tubulin. The polypeptide is Tubulin beta-3 chain (TUBB3) (Oomycete-like sp. (strain MacKay2000)).